The following is a 384-amino-acid chain: MKFIDEAKIEVAAGKGGNGATSFRREKFVPRGGPDGGDGGKGGSVWAEADENTNTLVEYRFVKRYQAKNGEKGHGSDRYGAGADDIVLKMPVGTLIRDLDTGENVADLTYHGQRVCLAKGGKGGLGNIHFKSSVNRAPKQSTPGEEGEARSLQLELKVLADVGLLGMPNAGKSTLITAVSAARPKIANYPFTTLHPNLGVVRIDENHSFVMADIPGLIEGAAEGAGLGHRFLKHLSRTGLLLHVVDLAPFDETVNPAEEALAIINELRKYDEELYGKPRWLVLNKLDMLDEEEARARTAAFLEAVGWDYPKPDDRFQFDMETPRLFQISALTHQGTQELVHQINQYLIEKKRIEAEKAEAERAATNVEIAEQQPKTDTGVFKPE.

The Obg domain maps to 1 to 159 (MKFIDEAKIE…RSLQLELKVL (159 aa)). The segment at 20–46 (ATSFRREKFVPRGGPDGGDGGKGGSVW) is disordered. Residues 33–43 (GPDGGDGGKGG) show a composition bias toward gly residues. Residues 160-348 (ADVGLLGMPN…LVHQINQYLI (189 aa)) form the OBG-type G domain. GTP is bound by residues 166 to 173 (GMPNAGKS), 191 to 195 (FTTLH), 213 to 216 (DIPG), 284 to 287 (NKLD), and 329 to 331 (SAL). Ser173 and Thr193 together coordinate Mg(2+). Positions 364–384 (ATNVEIAEQQPKTDTGVFKPE) are disordered.

The protein belongs to the TRAFAC class OBG-HflX-like GTPase superfamily. OBG GTPase family. In terms of assembly, monomer. Mg(2+) serves as cofactor.

Its subcellular location is the cytoplasm. In terms of biological role, an essential GTPase which binds GTP, GDP and possibly (p)ppGpp with moderate affinity, with high nucleotide exchange rates and a fairly low GTP hydrolysis rate. Plays a role in control of the cell cycle, stress response, ribosome biogenesis and in those bacteria that undergo differentiation, in morphogenesis control. The protein is GTPase Obg of Neisseria meningitidis serogroup A / serotype 4A (strain DSM 15465 / Z2491).